A 427-amino-acid chain; its full sequence is MELNIKMDRSKELFEESKKYLVGGVNSPVRSFKPFPFFVKSAKDCFLYDEDGNEFIDYCLAYGPMVLGHANENILNAVKSQMDLGTAYGVPSEKEILLAKEVINRIPCAEMVRFVNSGTEATMGAIRLARGVTGKDKIIKFEGAFHGAHDYVLVKTGSGALTHGAPNSPGIPEDTTKNTLLIPFNDEDAVRKVISENKNEIACIILEPVMGNVGCILPQDGYLQFLREITEENGILLIFDEVITGFRLSKGGAQEYYGIKSDLATVGKILGGGFPIGAITGKKEYMEQFSPNGQIYQAGTFNGNPVSVTAGIETLKNLEDKFYKETTKKADILSDFLRETAEKYNISAKVYNVASIFQVYFNEKEVVTYEDAKSSDTEKFMRYFYTLLENGVFVAPSQFECCFTSIKHNDEVLEKTMNAIDIAMKKL.

Position 268 is an N6-(pyridoxal phosphate)lysine (Lys-268).

The protein belongs to the class-III pyridoxal-phosphate-dependent aminotransferase family. HemL subfamily. Pyridoxal 5'-phosphate is required as a cofactor.

It is found in the cytoplasm. It carries out the reaction (S)-4-amino-5-oxopentanoate = 5-aminolevulinate. It participates in porphyrin-containing compound metabolism; protoporphyrin-IX biosynthesis; 5-aminolevulinate from L-glutamyl-tRNA(Glu): step 2/2. The polypeptide is Glutamate-1-semialdehyde 2,1-aminomutase (Methanococcus maripaludis (strain C6 / ATCC BAA-1332)).